Consider the following 255-residue polypeptide: MNILIANDDGVFAPGIQALADALKPLGRVVVVAPESERSGFSSALTLDRPLRPIQIAEDVWAVNGTPADCVYLSMNGLFDFEFDLVVSGINRGANLGDDVLYSGTVGAAFEGRLMKQPAIAVSLAGPDVRSYDHKDDYAQAAKWVHDFITKGLPALPPRHIFNINIPDVPQLKGTQITYQGRRAQSKPITSHVDPRGRQVYWIGLAGEAVTDPQRIASQIQSDFFAVANGFVSVTPIQMDATNYAVLEDLQASLG.

Asp-8, Asp-9, Ser-39, and Asn-91 together coordinate a divalent metal cation.

This sequence belongs to the SurE nucleotidase family. It depends on a divalent metal cation as a cofactor.

The protein resides in the cytoplasm. The enzyme catalyses a ribonucleoside 5'-phosphate + H2O = a ribonucleoside + phosphate. Functionally, nucleotidase that shows phosphatase activity on nucleoside 5'-monophosphates. The polypeptide is 5'-nucleotidase SurE (Acinetobacter baumannii (strain SDF)).